The primary structure comprises 258 residues: Heat-labile enterotoxin A chain (258 aa).

The signal sequence occupies residues 1 to 18 (MKNITFIFFILLASPLYA). NAD(+) is bound at residue 25 to 39 (RADSRPPDEIKRSGG). Residue Glu-128 is part of the active site. A disulfide bridge connects residues Cys-205 and Cys-217.

It belongs to the enterotoxin A family. Heterohexamer of one A chain and of five B chains.

Its function is as follows. The biological activity of the toxin is produced by the A chain, which activates intracellular adenyl cyclase. This chain is Heat-labile enterotoxin A chain (eltA), found in Escherichia coli O78:H11 (strain H10407 / ETEC).